Reading from the N-terminus, the 682-residue chain is DNA-directed RNA polymerase subunit beta' (682 aa).

4 residues coordinate Zn(2+): Cys-69, Cys-71, Cys-87, and Cys-90. Asp-489, Asp-491, and Asp-493 together coordinate Mg(2+).

Belongs to the RNA polymerase beta' chain family. RpoC1 subfamily. In plastids the minimal PEP RNA polymerase catalytic core is composed of four subunits: alpha, beta, beta', and beta''. When a (nuclear-encoded) sigma factor is associated with the core the holoenzyme is formed, which can initiate transcription. Mg(2+) serves as cofactor. It depends on Zn(2+) as a cofactor.

It localises to the plastid. Its subcellular location is the chloroplast. The enzyme catalyses RNA(n) + a ribonucleoside 5'-triphosphate = RNA(n+1) + diphosphate. In terms of biological role, DNA-dependent RNA polymerase catalyzes the transcription of DNA into RNA using the four ribonucleoside triphosphates as substrates. This chain is DNA-directed RNA polymerase subunit beta', found in Brachypodium distachyon (Purple false brome).